Here is a 419-residue protein sequence, read N- to C-terminus: L-rhamnose isomerase (419 aa).

Mn(2+) is bound by residues His-262, Asp-294, and Asp-296.

It belongs to the rhamnose isomerase family. As to quaternary structure, homotetramer. It depends on Mn(2+) as a cofactor.

Its subcellular location is the cytoplasm. It carries out the reaction L-rhamnopyranose = L-rhamnulose. The protein operates within carbohydrate degradation; L-rhamnose degradation; glycerone phosphate from L-rhamnose: step 1/3. In terms of biological role, catalyzes the interconversion of L-rhamnose and L-rhamnulose. In Escherichia coli O127:H6 (strain E2348/69 / EPEC), this protein is L-rhamnose isomerase.